The chain runs to 367 residues: Glutamate 5-kinase (367 aa).

Residue K8 coordinates ATP. Positions 49, 136, and 148 each coordinate substrate. Residues 168–169 (TD) and 210–216 (TGGMVTK) each bind ATP. Residues 275-353 (AGKLYLDEGA…REISTILGYA (79 aa)) form the PUA domain.

Belongs to the glutamate 5-kinase family.

The protein resides in the cytoplasm. The catalysed reaction is L-glutamate + ATP = L-glutamyl 5-phosphate + ADP. Its pathway is amino-acid biosynthesis; L-proline biosynthesis; L-glutamate 5-semialdehyde from L-glutamate: step 1/2. Catalyzes the transfer of a phosphate group to glutamate to form L-glutamate 5-phosphate. The protein is Glutamate 5-kinase of Nostoc punctiforme (strain ATCC 29133 / PCC 73102).